The following is a 113-amino-acid chain: DNA-binding protein Mevan_1162 (113 aa).

The segment covering 1-12 (MDPEEIKQKKLQ) has biased composition (basic and acidic residues). The interval 1-22 (MDPEEIKQKKLQEMQAKAQDPE) is disordered.

Belongs to the PDCD5 family.

The polypeptide is DNA-binding protein Mevan_1162 (Methanococcus vannielii (strain ATCC 35089 / DSM 1224 / JCM 13029 / OCM 148 / SB)).